Reading from the N-terminus, the 203-residue chain is Urease accessory protein UreG (203 aa).

10-17 contacts GTP; sequence GPVGAGKT.

Belongs to the SIMIBI class G3E GTPase family. UreG subfamily. In terms of assembly, homodimer. UreD, UreF and UreG form a complex that acts as a GTP-hydrolysis-dependent molecular chaperone, activating the urease apoprotein by helping to assemble the nickel containing metallocenter of UreC. The UreE protein probably delivers the nickel.

Its subcellular location is the cytoplasm. Its function is as follows. Facilitates the functional incorporation of the urease nickel metallocenter. This process requires GTP hydrolysis, probably effectuated by UreG. This chain is Urease accessory protein UreG, found in Kocuria rhizophila (strain ATCC 9341 / DSM 348 / NBRC 103217 / DC2201).